A 733-amino-acid chain; its full sequence is Phosphoribosylformylglycinamidine synthase subunit PurL (733 aa).

Histidine 42 is an active-site residue. Residues tyrosine 45 and lysine 84 each contribute to the ATP site. Position 86 (glutamate 86) interacts with Mg(2+). Substrate contacts are provided by residues 87–90 and arginine 109; that span reads SHNH. Residue histidine 88 is the Proton acceptor of the active site. Aspartate 110 provides a ligand contact to Mg(2+). Glutamine 233 is a substrate binding site. Aspartate 261 is a Mg(2+) binding site. 305-307 is a binding site for substrate; the sequence is ESQ. The ATP site is built by aspartate 489 and glycine 526. Asparagine 527 provides a ligand contact to Mg(2+). Serine 529 contributes to the substrate binding site.

It belongs to the FGAMS family. In terms of assembly, monomer. Part of the FGAM synthase complex composed of 1 PurL, 1 PurQ and 2 PurS subunits.

The protein resides in the cytoplasm. The catalysed reaction is N(2)-formyl-N(1)-(5-phospho-beta-D-ribosyl)glycinamide + L-glutamine + ATP + H2O = 2-formamido-N(1)-(5-O-phospho-beta-D-ribosyl)acetamidine + L-glutamate + ADP + phosphate + H(+). It functions in the pathway purine metabolism; IMP biosynthesis via de novo pathway; 5-amino-1-(5-phospho-D-ribosyl)imidazole from N(2)-formyl-N(1)-(5-phospho-D-ribosyl)glycinamide: step 1/2. In terms of biological role, part of the phosphoribosylformylglycinamidine synthase complex involved in the purines biosynthetic pathway. Catalyzes the ATP-dependent conversion of formylglycinamide ribonucleotide (FGAR) and glutamine to yield formylglycinamidine ribonucleotide (FGAM) and glutamate. The FGAM synthase complex is composed of three subunits. PurQ produces an ammonia molecule by converting glutamine to glutamate. PurL transfers the ammonia molecule to FGAR to form FGAM in an ATP-dependent manner. PurS interacts with PurQ and PurL and is thought to assist in the transfer of the ammonia molecule from PurQ to PurL. In Moorella thermoacetica (strain ATCC 39073 / JCM 9320), this protein is Phosphoribosylformylglycinamidine synthase subunit PurL.